An 801-amino-acid polypeptide reads, in one-letter code: Glycerol-3-phosphate acyltransferase 2, mitochondrial (801 aa).

Residues 1 to 24 (METMLKSNPQMQQRNNHSGQETSL) form a disordered region. At 1 to 305 (METMLKSNPQ…PGPRLSALGQ (305 aa)) the chain is on the cytoplasmic side. The segment at 180 to 290 (QLHKGQMKMV…SGQPLLIFLE (111 aa)) is acyltransferase. The short motif at 205 to 210 (HKSLLD) is the HXXXXD motif element. The chain crosses the membrane as a helical span at residues 306-332 (AWLGLVVQAVQAGIVPDATLVPVATAY). The Mitochondrial intermembrane portion of the chain corresponds to 333–449 (DLVPDAPCNM…QLLVRRLSRH (117 aa)). The chain crosses the membrane as a helical span at residues 450 to 472 (VLSASVASSAVMSTAIMATLLLL). Over 473–795 (KHQKGVVLSQ…DNQDKLEQFI (323 aa)) the chain is Cytoplasmic.

This sequence belongs to the GPAT/DAPAT family. In terms of assembly, interacts with PIWIL2. In terms of tissue distribution, expressed in spermatocytes and spermatides.

The protein localises to the mitochondrion outer membrane. The catalysed reaction is sn-glycerol 3-phosphate + an acyl-CoA = a 1-acyl-sn-glycero-3-phosphate + CoA. The enzyme catalyses a 1-acyl-sn-glycero-3-phosphate + an acyl-CoA = a 1,2-diacyl-sn-glycero-3-phosphate + CoA. It catalyses the reaction 1-(9Z-octadecenoyl)-sn-glycero-3-phosphate + (9Z)-octadecenoyl-CoA = 1,2-di-(9Z-octadecenoyl)-sn-glycero-3-phosphate + CoA. It carries out the reaction 1-(9Z-octadecenoyl)-sn-glycero-3-phosphate + (5Z,8Z,11Z,14Z)-eicosatetraenoyl-CoA = 1-(9Z)-octadecenoyl-2-(5Z,8Z,11Z,14Z)-eicosatetraenoyl-sn-glycero-3-phosphate + CoA. The catalysed reaction is (5Z,8Z,11Z,14Z)-eicosatetraenoyl-CoA + sn-glycerol 3-phosphate = 1-(5Z,8Z,11Z,14Z-eicosatetraenoyl)-sn-glycero-3-phosphate + CoA. The protein operates within phospholipid metabolism; CDP-diacylglycerol biosynthesis; CDP-diacylglycerol from sn-glycerol 3-phosphate: step 1/3. Inhibited by N-ethylmaleimide (NEM). Its function is as follows. Transfers an acyl-group from acyl-ACP to the sn-1 position of glycerol-3-phosphate producing a lysophosphatidic acid (LPA), an essential step for the triacylglycerol (TAG) and glycerophospholipids. In vitro also transfers an acyl-group from acyl-ACP to the LPA producing a phosphatidic acid (PA). Prefers arachidonoyl-CoA as the acyl donor. Required for primary processing step during piRNA biosynthesis. Molecular mechanisms by which it promotes piRNA biosynthesis are unclear and do not involve its acyltransferase activity. This Rattus norvegicus (Rat) protein is Glycerol-3-phosphate acyltransferase 2, mitochondrial.